The sequence spans 654 residues: Fructose-1,6-bisphosphatase class 3 (654 aa).

The tract at residues 288 to 307 (NPAFKPKKRPDKHERLTQRE) is disordered. A compositionally biased stretch (basic and acidic residues) spans 298–307 (DKHERLTQRE).

It belongs to the FBPase class 3 family. The cofactor is Mn(2+).

It carries out the reaction beta-D-fructose 1,6-bisphosphate + H2O = beta-D-fructose 6-phosphate + phosphate. It functions in the pathway carbohydrate biosynthesis; gluconeogenesis. The sequence is that of Fructose-1,6-bisphosphatase class 3 from Staphylococcus aureus (strain Mu3 / ATCC 700698).